Consider the following 211-residue polypeptide: Outer-membrane lipoprotein carrier protein (211 aa).

The first 24 residues, 1–24 (MNTIKILIGLLGIFLFSLSGIVSA), serve as a signal peptide directing secretion.

It belongs to the LolA family. Monomer.

It localises to the periplasm. In terms of biological role, participates in the translocation of lipoproteins from the inner membrane to the outer membrane. Only forms a complex with a lipoprotein if the residue after the N-terminal Cys is not an aspartate (The Asp acts as a targeting signal to indicate that the lipoprotein should stay in the inner membrane). This is Outer-membrane lipoprotein carrier protein from Coxiella burnetii (strain CbuK_Q154) (Coxiella burnetii (strain Q154)).